Here is an 88-residue protein sequence, read N- to C-terminus: uncharacterized protein (88 aa).

2 helical membrane passes run 8–28 (IFLSFFSPIYLSLLLNGSIFF) and 45–65 (ELLRCQICLCSLFWMVTVINL).

It is found in the membrane. This is an uncharacterized protein from Saccharomyces cerevisiae (strain ATCC 204508 / S288c) (Baker's yeast).